Consider the following 464-residue polypeptide: ATP synthase subunit beta 2 (464 aa).

147–154 serves as a coordination point for ATP; sequence GGAGVGKT.

Belongs to the ATPase alpha/beta chains family. As to quaternary structure, F-type ATPases have 2 components, CF(1) - the catalytic core - and CF(0) - the membrane proton channel. CF(1) has five subunits: alpha(3), beta(3), gamma(1), delta(1), epsilon(1). CF(0) has four main subunits: a(1), b(1), b'(1) and c(9-12).

The protein localises to the cell inner membrane. It catalyses the reaction ATP + H2O + 4 H(+)(in) = ADP + phosphate + 5 H(+)(out). Produces ATP from ADP in the presence of a proton gradient across the membrane. The catalytic sites are hosted primarily by the beta subunits. This Cereibacter sphaeroides (strain ATCC 17023 / DSM 158 / JCM 6121 / CCUG 31486 / LMG 2827 / NBRC 12203 / NCIMB 8253 / ATH 2.4.1.) (Rhodobacter sphaeroides) protein is ATP synthase subunit beta 2.